The chain runs to 293 residues: MSPNSEATGTAWAPPPPRPSRGVIMISSVSTNDVRRFLLCMRVYSTVAVQGTCTFLLCLGLVLAFPHLKGTVFLCCTGFMPPLSLMVPTICLALLHGKRDEGSFTSPPSPGLLTIYSVLTTLSVIVASACSSSTLVTFSGLLACVLFSLCSCVTGLAGHNHRRWQVIVTLFVIGVIAFLIALYLQPVPLGHKLFLGYYAMALSFMLVVTVFDTTRLFEIAWSEADLLTLCLYENLVYLYLLILILFTTEDSLDKLIAWMTWLSSRATGATNAASISGCDLLREVQRNLTRTMA.

7 helical membrane-spanning segments follow: residues 55-75 (FLLCLGLVLAFPHLKGTVFLC), 77-97 (TGFMPPLSLMVPTICLALLHG), 110-130 (PGLLTIYSVLTTLSVIVASAC), 138-158 (FSGLLACVLFSLCSCVTGLAG), 164-184 (WQVIVTLFVIGVIAFLIALYL), 193-213 (LFLGYYAMALSFMLVVTVFDT), and 226-246 (LLTLCLYENLVYLYLLILILF). N287 is a glycosylation site (N-linked (GlcNAc...) asparagine; by host).

The protein belongs to the cytomegalovirus US12 family.

The protein resides in the membrane. This is an uncharacterized protein from Human cytomegalovirus (strain AD169) (HHV-5).